The sequence spans 241 residues: MORN repeat-containing protein 3 (241 aa).

Residues 6–35 (CPQKSEPLWKEWDQKAQKNGLRHQVFAVNG) are interaction with MDM2. 7 MORN repeats span residues 38 to 60 (YVGE…KNGA), 62 to 84 (YEGD…DQET), 91 to 113 (YSGW…PKEY), 114 to 136 (YEGD…NGDI), 137 to 159 (YEGQ…NGNR), 160 to 182 (YEGN…DHGQ), and 184 to 205 (FEGF…GRDE). The tract at residues 76-100 (TLSLPDQETGKYKRAYSGWWKGDKK) is interaction with SIRT1. Positions 206 to 240 (APQPTQFPIPEVKILDPDGVLEEALAMFKKTKEEG) are interaction with TP53.

Interacts with MEIG1. Interacts with TP53, MDM2 and SIRT1; the interactions mediate post-transcriptional modifications of TP53 by MDM2 and SIRT1.

It is found in the cytoplasmic vesicle. Its subcellular location is the secretory vesicle. It localises to the acrosome. Functionally, assembles a suppression complex (suppresome) by tethering SIRT1 and MDM2 to regulate composite modifications of p53/TP53. Confers both deacetylation-mediated functional inactivation, by SIRT1, and ubiquitination-dependent degradation, by MDM2, of p53/TP53, promoting a proliferative and cell survival behaviors. May play a role in the regulation of spermatogenesis. This Bos taurus (Bovine) protein is MORN repeat-containing protein 3 (MORN3).